A 62-amino-acid chain; its full sequence is Small ribosomal subunit protein bS21 (62 aa).

Belongs to the bacterial ribosomal protein bS21 family.

The protein is Small ribosomal subunit protein bS21 (rpsU) of Mycoplasma genitalium (strain ATCC 33530 / DSM 19775 / NCTC 10195 / G37) (Mycoplasmoides genitalium).